The sequence spans 284 residues: Tropomyosin (284 aa).

The interval methionine 1 to glutamate 54 is disordered. The stretch at methionine 1–glutamate 273 forms a coiled coil. Residues lysine 12 to alanine 45 are compositionally biased toward basic and acidic residues.

The protein belongs to the tropomyosin family. Homodimer. As to expression, muscle (at protein level). Expressed in leg and chest protection muscle (at protein level). Expressed in claw muscle.

Tropomyosin, in association with the troponin complex, plays a central role in the calcium dependent regulation of muscle contraction. This Eriocheir sinensis (Chinese mitten crab) protein is Tropomyosin.